The primary structure comprises 92 residues: Small ribosomal subunit protein uS19c (92 aa).

The protein belongs to the universal ribosomal protein uS19 family.

Its subcellular location is the plastid. The protein localises to the chloroplast. Its function is as follows. Protein S19 forms a complex with S13 that binds strongly to the 16S ribosomal RNA. The sequence is that of Small ribosomal subunit protein uS19c from Amborella trichopoda.